The chain runs to 422 residues: GTPase Obg (422 aa).

The Obg domain maps to 1 to 156; sequence MKFIDEVNVL…FALRLVLKVL (156 aa). One can recognise an OBG-type G domain in the interval 157-324; the sequence is ADVGLVGKPS…LKAAIFKMLE (168 aa). Residues 163-170, 188-192, 209-212, 278-281, and 305-307 contribute to the GTP site; these read GKPSAGKS, FTTLV, DLPG, NKSD, and SAL. 2 residues coordinate Mg(2+): Ser170 and Thr190. The 79-residue stretch at 342–420 folds into the OCT domain; the sequence is NITLDRDALK…IGNFEFDWSD (79 aa).

It belongs to the TRAFAC class OBG-HflX-like GTPase superfamily. OBG GTPase family. In terms of assembly, monomer. Mg(2+) is required as a cofactor.

It is found in the cytoplasm. Its function is as follows. An essential GTPase which binds GTP, GDP and possibly (p)ppGpp with moderate affinity, with high nucleotide exchange rates and a fairly low GTP hydrolysis rate. Plays a role in control of the cell cycle, stress response, ribosome biogenesis and in those bacteria that undergo differentiation, in morphogenesis control. This chain is GTPase Obg, found in Metamycoplasma arthritidis (strain 158L3-1) (Mycoplasma arthritidis).